We begin with the raw amino-acid sequence, 666 residues long: Transmembrane protein 201 (666 aa).

Met1 carries the post-translational modification N-acetylmethionine. The Nuclear segment spans residues 1-213 (MEGVSALLAR…FSSAVKSPVQ (213 aa)). A helical membrane pass occupies residues 214–234 (VILLRALAFLACAFLLTTALY). At 235-297 (GASGHFAPGT…EAWAFGQSHQ (63 aa)) the chain is on the perinuclear space side. Residues 298 to 318 (TGVVALGLLTCLLAMLLAGRI) traverse the membrane as a helical segment. The Nuclear segment spans residues 319 to 322 (RLRR). The helical transmembrane segment at 323–343 (IDAFCTCLWALLLGLHLAEQH) threads the bilayer. Residues 344–356 (LQAASPSWLDTLK) lie on the Perinuclear space side of the membrane. The helical transmembrane segment at 357–374 (FSTTSLCCLVGFTAAVAT) threads the bilayer. Residues 375–644 (RKATGPRRFR…GRFGPSLVRG (270 aa)) lie on the Nuclear side of the membrane. 7 positions are modified to phosphoserine: Ser441, Ser444, Ser450, Ser454, Ser466, Ser477, and Ser480. Residues 502–581 (PLPSPAPSVA…PPHVPRKPPL (80 aa)) form a disordered region. Residues 508 to 520 (PSVAGSVASSSGS) show a composition bias toward low complexity. Ser529 is subject to Phosphoserine. A helical membrane pass occupies residues 645–665 (LLAVSLAANALFTSVFLYQSL). Position 666 (Arg666) is a topological domain, perinuclear space.

Belongs to the TMEM201 family. In terms of assembly, interacts with SUN2 and LMNA. May bind to Ran GTPase; has a greater affinity for Ran-GTP over Ran-GDP. As to quaternary structure, interacts with EMD.

It is found in the nucleus inner membrane. The protein resides in the cytoplasm. It localises to the cytoskeleton. Its subcellular location is the spindle pole. Critical regulator of angiogenesis and endothelial cell (EC) migration. Promotes the migration of endothelial cells, which is essential for angiogenesis. Interacts with the linker of nucleoskeleton and cytoskeleton (LINC) complex, which plays a vital role in connecting the cell's cytoskeleton to the nuclear envelope. This interaction is essential for maintaining cellular structure and facilitating the movement of endothelial cells, which is critical for proper vascular development. Involved in nuclear movement during fibroblast polarization and migration. Overexpression can recruit Ran GTPase to the nuclear periphery. In terms of biological role, may define a distinct membrane domain in the vicinity of the mitotic spindle. Involved in the organization of the nuclear envelope implicating EMD, SUN1 and A-type lamina. The protein is Transmembrane protein 201 (TMEM201) of Homo sapiens (Human).